Here is a 1014-residue protein sequence, read N- to C-terminus: Klotho (1014 aa).

The first 34 residues, 1–34 (MLARAPPRRPPRLVLLRLLLLHLLLLALRARCLS), serve as a signal peptide directing secretion. At 35–982 (AEPGQGAQTW…TECGFFQTRK (948 aa)) the chain is on the extracellular side. Glycosyl hydrolase-1 stretches follow at residues 59–508 (LHDT…DNGF) and 517–955 (LEGT…SNGF). 6 N-linked (GlcNAc...) asparagine glycosylation sites follow: asparagine 161, asparagine 285, asparagine 346, asparagine 609, asparagine 614, and asparagine 696. The helical transmembrane segment at 983-1003 (SLLVFISFLVFTFIISLALIF) threads the bilayer. Topologically, residues 1004–1014 (HYSKKGQRSYK) are cytoplasmic.

Belongs to the glycosyl hydrolase 1 family. Klotho subfamily. In terms of assembly, homodimer. Interacts with FGF23 and FGFR1. In terms of processing, N-glycosylated. Membrane-bound protein is present in distal renal tubules, inner ear, ependymal cells of brain choroid plexus, elongating spermatids and mature oocytes (at protein level). Soluble peptide is present in serum (100 pM) and cerebrospinal fluid. Expressed strongly in kidney, moderately in brain choroid plexus, and at low levels in pituitary, placenta, skeletal muscle, urinary bladder, aorta, pancreas, testis, ovary, colon, thyroid gland and adipocytes.

The protein localises to the cell membrane. It localises to the apical cell membrane. It is found in the secreted. The enzyme catalyses a beta-D-glucuronoside + H2O = D-glucuronate + an alcohol. Inhibited by D-saccharic acid 1,4-lactone and taurocholic acid. Its function is as follows. May have weak glycosidase activity towards glucuronylated steroids. However, it lacks essential active site Glu residues at positions 241 and 874, suggesting it may be inactive as a glycosidase in vivo. May be involved in the regulation of calcium and phosphorus homeostasis by inhibiting the synthesis of active vitamin D. Essential factor for the specific interaction between FGF23 and FGFR1. Functionally, the Klotho peptide generated by cleavage of the membrane-bound isoform may be an anti-aging circulating hormone which would extend life span by inhibiting insulin/IGF1 signaling. The chain is Klotho (Kl) from Mus musculus (Mouse).